Here is a 408-residue protein sequence, read N- to C-terminus: Dual-specificity RNA methyltransferase RlmN (408 aa).

The active-site Proton acceptor is the E120. The Radical SAM core domain occupies 126–375; sequence EEGRGTLCIS…IRTPRGRDIL (250 aa). C133 and C378 form a disulfide bridge. The [4Fe-4S] cluster site is built by C140, C144, and C147. S-adenosyl-L-methionine contacts are provided by residues 204–205, S236, 258–260, and N335; these read GE and SLH. The S-methylcysteine intermediate role is filled by C378.

It belongs to the radical SAM superfamily. RlmN family. [4Fe-4S] cluster is required as a cofactor.

The protein localises to the cytoplasm. It carries out the reaction adenosine(2503) in 23S rRNA + 2 reduced [2Fe-2S]-[ferredoxin] + 2 S-adenosyl-L-methionine = 2-methyladenosine(2503) in 23S rRNA + 5'-deoxyadenosine + L-methionine + 2 oxidized [2Fe-2S]-[ferredoxin] + S-adenosyl-L-homocysteine. The catalysed reaction is adenosine(37) in tRNA + 2 reduced [2Fe-2S]-[ferredoxin] + 2 S-adenosyl-L-methionine = 2-methyladenosine(37) in tRNA + 5'-deoxyadenosine + L-methionine + 2 oxidized [2Fe-2S]-[ferredoxin] + S-adenosyl-L-homocysteine. Its function is as follows. Specifically methylates position 2 of adenine 2503 in 23S rRNA and position 2 of adenine 37 in tRNAs. m2A2503 modification seems to play a crucial role in the proofreading step occurring at the peptidyl transferase center and thus would serve to optimize ribosomal fidelity. This is Dual-specificity RNA methyltransferase RlmN from Rhizobium johnstonii (strain DSM 114642 / LMG 32736 / 3841) (Rhizobium leguminosarum bv. viciae).